We begin with the raw amino-acid sequence, 598 residues long: Major royal jelly protein 5 (598 aa).

The N-terminal stretch at M1–G17 is a signal peptide. N-linked (GlcNAc...) asparagine glycans are attached at residues N148, N164, N181, and N324.

The protein belongs to the major royal jelly protein family. Found in and secreted from the hypopharyngeal glands of the worker honey bee (at protein level); expression peaks at 8 days post eclosion. Expressed in the brains of adult worker bees peaking at 12 days post eclosion (at protein level). Expressed in the spermatheca of adult queen bees (at protein level); Expression levels are higher in mated queens than in virgin queens. Expressed in the heads of worker bees after eclosion, expression dropping with age and detectable up to 26 days of age.

Its subcellular location is the secreted. In terms of biological role, component of royal jelly, a substance produced in the hypopharyngeal gland containing proteins, free amino acids, fatty acids, sugars and other nutrients, which is fed to developing larvae by worker nurse bees. Major royal jelly proteins (MRJPs) are high in essential amino acids and probably have a nutritional function in larval food. All larvae are fed some royal jelly (also known as worker jelly) early in their development but it forms the principal source of nutrition for larvae destined to become queen bees. Produced in the spermatheca of adult queen bees, along with other major royal jelly proteins, where it may act as a nutrient supply for sperm stored by mated queens, or be involved in energy metabolism. The polypeptide is Major royal jelly protein 5 (Apis mellifera (Honeybee)).